The chain runs to 278 residues: 4-hydroxy-3-methylbut-2-enyl diphosphate reductase (278 aa).

Residue Cys-12 participates in [4Fe-4S] cluster binding. (2E)-4-hydroxy-3-methylbut-2-enyl diphosphate contacts are provided by His-41 and His-74. Dimethylallyl diphosphate is bound by residues His-41 and His-74. Isopentenyl diphosphate-binding residues include His-41 and His-74. Cys-96 provides a ligand contact to [4Fe-4S] cluster. (2E)-4-hydroxy-3-methylbut-2-enyl diphosphate is bound at residue His-124. His-124 is a dimethylallyl diphosphate binding site. His-124 contributes to the isopentenyl diphosphate binding site. The active-site Proton donor is the Glu-126. Thr-161 contributes to the (2E)-4-hydroxy-3-methylbut-2-enyl diphosphate binding site. Cys-189 is a binding site for [4Fe-4S] cluster. (2E)-4-hydroxy-3-methylbut-2-enyl diphosphate contacts are provided by Ser-217, Asn-219, and Ser-261. Residues Ser-217, Asn-219, and Ser-261 each contribute to the dimethylallyl diphosphate site. Isopentenyl diphosphate-binding residues include Ser-217, Asn-219, and Ser-261.

The protein belongs to the IspH family. [4Fe-4S] cluster is required as a cofactor.

The enzyme catalyses isopentenyl diphosphate + 2 oxidized [2Fe-2S]-[ferredoxin] + H2O = (2E)-4-hydroxy-3-methylbut-2-enyl diphosphate + 2 reduced [2Fe-2S]-[ferredoxin] + 2 H(+). The catalysed reaction is dimethylallyl diphosphate + 2 oxidized [2Fe-2S]-[ferredoxin] + H2O = (2E)-4-hydroxy-3-methylbut-2-enyl diphosphate + 2 reduced [2Fe-2S]-[ferredoxin] + 2 H(+). It functions in the pathway isoprenoid biosynthesis; dimethylallyl diphosphate biosynthesis; dimethylallyl diphosphate from (2E)-4-hydroxy-3-methylbutenyl diphosphate: step 1/1. Its pathway is isoprenoid biosynthesis; isopentenyl diphosphate biosynthesis via DXP pathway; isopentenyl diphosphate from 1-deoxy-D-xylulose 5-phosphate: step 6/6. Catalyzes the conversion of 1-hydroxy-2-methyl-2-(E)-butenyl 4-diphosphate (HMBPP) into a mixture of isopentenyl diphosphate (IPP) and dimethylallyl diphosphate (DMAPP). Acts in the terminal step of the DOXP/MEP pathway for isoprenoid precursor biosynthesis. This chain is 4-hydroxy-3-methylbut-2-enyl diphosphate reductase, found in Anaeromyxobacter sp. (strain K).